Here is a 405-residue protein sequence, read N- to C-terminus: S-adenosylmethionine synthase (405 aa).

An ATP-binding site is contributed by histidine 22. A Mg(2+)-binding site is contributed by aspartate 24. Glutamate 50 is a binding site for K(+). L-methionine contacts are provided by glutamate 63 and glutamine 107. Residues 107 to 117 (QSPDIAQGVDR) are flexible loop. Residues 184-186 (DGK), 250-251 (RF), aspartate 259, 265-266 (RK), alanine 282, and lysine 286 contribute to the ATP site. Aspartate 259 contacts L-methionine. An L-methionine-binding site is contributed by lysine 290.

It belongs to the AdoMet synthase family. Homotetramer; dimer of dimers. Requires Mg(2+) as cofactor. The cofactor is K(+).

Its subcellular location is the cytoplasm. The enzyme catalyses L-methionine + ATP + H2O = S-adenosyl-L-methionine + phosphate + diphosphate. It participates in amino-acid biosynthesis; S-adenosyl-L-methionine biosynthesis; S-adenosyl-L-methionine from L-methionine: step 1/1. Catalyzes the formation of S-adenosylmethionine (AdoMet) from methionine and ATP. The overall synthetic reaction is composed of two sequential steps, AdoMet formation and the subsequent tripolyphosphate hydrolysis which occurs prior to release of AdoMet from the enzyme. In Roseiflexus sp. (strain RS-1), this protein is S-adenosylmethionine synthase.